The primary structure comprises 121 residues: Small ribosomal subunit protein uS13 (121 aa).

A disordered region spans residues 89 to 121 (MRHRRGLPVRGQHTKNNARTRKGKAVSIAGKKK).

It belongs to the universal ribosomal protein uS13 family. As to quaternary structure, part of the 30S ribosomal subunit. Forms a loose heterodimer with protein S19. Forms two bridges to the 50S subunit in the 70S ribosome.

In terms of biological role, located at the top of the head of the 30S subunit, it contacts several helices of the 16S rRNA. In the 70S ribosome it contacts the 23S rRNA (bridge B1a) and protein L5 of the 50S subunit (bridge B1b), connecting the 2 subunits; these bridges are implicated in subunit movement. Contacts the tRNAs in the A and P-sites. This chain is Small ribosomal subunit protein uS13, found in Levilactobacillus brevis (strain ATCC 367 / BCRC 12310 / CIP 105137 / JCM 1170 / LMG 11437 / NCIMB 947 / NCTC 947) (Lactobacillus brevis).